Here is a 429-residue protein sequence, read N- to C-terminus: Putative chloride channel protein ClcB-like (429 aa).

11 consecutive transmembrane segments (helical) span residues 1 to 21, 44 to 64, 146 to 166, 168 to 188, 200 to 220, 221 to 241, 259 to 279, 283 to 303, 315 to 335, 354 to 376, and 383 to 405; these read MLAIAGLIGCAGALATIAFRE, LPWWARLLVPTAGGLLAGLTL, LLVACGAAAGITSAYNAPIAG, VFVCEIVFGAITTATLGPLLV, FFGYGAVYAMPHFDFVSGWEV, LTYLGLGLAAGMAGPLLLGLI, LALGGLIVGALSIRVPEVWGN, VVNGFLHAPWLWQTVALVLVC, GAVGGVFTPTLFCGAALGLLY, AVVGMGALLAATTHAPLMSILMI, and YQVVLPLMLACITGYVTAHATGA.

It belongs to the chloride channel (TC 2.A.49) family. ClcB subfamily.

It localises to the cell inner membrane. The chain is Putative chloride channel protein ClcB-like from Ralstonia nicotianae (strain ATCC BAA-1114 / GMI1000) (Ralstonia solanacearum).